The sequence spans 220 residues: Uracil-DNA glycosylase (220 aa).

Asp60 acts as the Proton acceptor in catalysis.

This sequence belongs to the uracil-DNA glycosylase (UDG) superfamily. UNG family.

The protein resides in the cytoplasm. It catalyses the reaction Hydrolyzes single-stranded DNA or mismatched double-stranded DNA and polynucleotides, releasing free uracil.. Its function is as follows. Excises uracil residues from the DNA which can arise as a result of misincorporation of dUMP residues by DNA polymerase or due to deamination of cytosine. The polypeptide is Uracil-DNA glycosylase (Francisella tularensis subsp. tularensis (strain FSC 198)).